A 572-amino-acid polypeptide reads, in one-letter code: Urease subunit alpha (572 aa).

One can recognise a Urease domain in the interval 136-572; the sequence is GGIDTHIHWI…VPLAQRYFLF (437 aa). Ni(2+) is bound by residues H141, H143, and K224. An N6-carboxylysine modification is found at K224. H226 is a substrate binding site. Ni(2+)-binding residues include H253 and H279. The active-site Proton donor is the H327. Ni(2+) is bound at residue D367.

It belongs to the metallo-dependent hydrolases superfamily. Urease alpha subunit family. In terms of assembly, heterotrimer of UreA (gamma), UreB (beta) and UreC (alpha) subunits. Three heterotrimers associate to form the active enzyme. It depends on Ni cation as a cofactor. In terms of processing, carboxylation allows a single lysine to coordinate two nickel ions.

It is found in the cytoplasm. It carries out the reaction urea + 2 H2O + H(+) = hydrogencarbonate + 2 NH4(+). The protein operates within nitrogen metabolism; urea degradation; CO(2) and NH(3) from urea (urease route): step 1/1. In Actinobacillus pleuropneumoniae serotype 3 (strain JL03), this protein is Urease subunit alpha.